A 737-amino-acid polypeptide reads, in one-letter code: Ribosome-releasing factor 2, mitochondrial (737 aa).

A mitochondrion-targeting transit peptide spans 1 to 36 (MLCNRLHKAAFAARLRPRLPATVASCRQVHNSDGTI). The tr-type G domain occupies 39–318 (KRIRNIGILA…SVLNFLPAPS (280 aa)). Residues 48–55 (AHIDAGKT), 112–116 (DTPGH), and 166–169 (NKMD) contribute to the GTP site.

Belongs to the TRAFAC class translation factor GTPase superfamily. Classic translation factor GTPase family. EF-G/EF-2 subfamily.

It is found in the mitochondrion. Mitochondrial GTPase that mediates the disassembly of ribosomes from messenger RNA at the termination of mitochondrial protein biosynthesis. Not involved in the GTP-dependent ribosomal translocation step during translation elongation. The sequence is that of Ribosome-releasing factor 2, mitochondrial from Anopheles gambiae (African malaria mosquito).